The sequence spans 244 residues: uncharacterized protein (244 aa).

The next 6 membrane-spanning stretches (helical) occupy residues 21–41 (FPYS…YGIY), 44–64 (ALGF…AGSV), 66–86 (FIAA…LITL), 139–159 (WYMF…AAMG), 165–185 (VLPF…LVIF), and 199–219 (LLGL…YFLI).

It belongs to the AzlC family.

It is found in the cell membrane. This is an uncharacterized protein from Haemophilus influenzae (strain ATCC 51907 / DSM 11121 / KW20 / Rd).